We begin with the raw amino-acid sequence, 397 residues long: MTTKDKGDQKELQKYLSEWQKRHQEYLEKKSQEKASETDEEERNAEPLETSESAGTKETDNSEDEKEDQTQDQASDDDETNESEESEDVEEPEEENIEESSDVSEDRTEKFIGQADVGIEKEAKRDKPRIERIHLYRALPVLVISSLLILLSLYFITPLGSLKNLVVTGNERVTQDEIIKATQIDSRDYTLTTFLNRNQYANNLKKANSWIEKAEISYQFPITFKIQVTEYKILAYEASTGNIYPVISNGTVINQPVKKEALPENYMRLNLSDKAKVKKLVQELSDVPDSIKNEIQTVDLTPSKATKDLLTLTMRDEHKIIVPLSDIHKKLPYYSRVHPLLTEPSIVDMEAGIFSYSASLVQKEEQDQEQEKEESSEETVPGETEAAPSDVTDETNN.

The Cytoplasmic portion of the chain corresponds to 1-138 (MTTKDKGDQK…RIERIHLYRA (138 aa)). Positions 24–37 (QEYLEKKSQEKASE) are enriched in basic and acidic residues. A disordered region spans residues 24–115 (QEYLEKKSQE…DRTEKFIGQA (92 aa)). Acidic residues predominate over residues 74–103 (ASDDDETNESEESEDVEEPEEENIEESSDV). Residues 139–159 (LPVLVISSLLILLSLYFITPL) traverse the membrane as a helical segment. The POTRA domain maps to 160–231 (GSLKNLVVTG…ITFKIQVTEY (72 aa)). Residues 160-397 (GSLKNLVVTG…PSDVTDETNN (238 aa)) are Extracellular-facing. The segment at 360-397 (LVQKEEQDQEQEKEESSEETVPGETEAAPSDVTDETNN) is disordered. Residues 366 to 377 (QDQEQEKEESSE) show a composition bias toward acidic residues.

It belongs to the FtsQ/DivIB family. DivIB subfamily.

The protein resides in the cell membrane. Functionally, cell division protein that may be involved in stabilizing or promoting the assembly of the division complex. In Streptococcus gordonii (strain Challis / ATCC 35105 / BCRC 15272 / CH1 / DL1 / V288), this protein is Cell division protein DivIB.